Consider the following 149-residue polypeptide: Probable flagellum biosynthesis repressor protein FlbT (149 aa).

It belongs to the FlbT family.

Has a post-transcriptional repressor function in flagellum biogenesis. Associates with the 5'-UTR of fljK mRNA and promotes its degradation. The sequence is that of Probable flagellum biosynthesis repressor protein FlbT from Agrobacterium fabrum (strain C58 / ATCC 33970) (Agrobacterium tumefaciens (strain C58)).